Consider the following 173-residue polypeptide: Crossover junction endodeoxyribonuclease RuvC (173 aa).

Residues Asp-8, Glu-67, and Asp-139 contribute to the active site. Residues Asp-8, Glu-67, and Asp-139 each coordinate Mg(2+).

This sequence belongs to the RuvC family. As to quaternary structure, homodimer which binds Holliday junction (HJ) DNA. The HJ becomes 2-fold symmetrical on binding to RuvC with unstacked arms; it has a different conformation from HJ DNA in complex with RuvA. In the full resolvosome a probable DNA-RuvA(4)-RuvB(12)-RuvC(2) complex forms which resolves the HJ. Requires Mg(2+) as cofactor.

The protein localises to the cytoplasm. The enzyme catalyses Endonucleolytic cleavage at a junction such as a reciprocal single-stranded crossover between two homologous DNA duplexes (Holliday junction).. The RuvA-RuvB-RuvC complex processes Holliday junction (HJ) DNA during genetic recombination and DNA repair. Endonuclease that resolves HJ intermediates. Cleaves cruciform DNA by making single-stranded nicks across the HJ at symmetrical positions within the homologous arms, yielding a 5'-phosphate and a 3'-hydroxyl group; requires a central core of homology in the junction. The consensus cleavage sequence is 5'-(A/T)TT(C/G)-3'. Cleavage occurs on the 3'-side of the TT dinucleotide at the point of strand exchange. HJ branch migration catalyzed by RuvA-RuvB allows RuvC to scan DNA until it finds its consensus sequence, where it cleaves and resolves the cruciform DNA. The protein is Crossover junction endodeoxyribonuclease RuvC of Shewanella pealeana (strain ATCC 700345 / ANG-SQ1).